The following is an 883-amino-acid chain: Integrator complex subunit 6-B (883 aa).

Residues 3–227 (ILLFLLDTSA…QCLESLVQKI (225 aa)) form the VWFA domain. The Inhibitory loop signature appears at 626–633 (MMIDEADE).

It belongs to the Integrator subunit 6 family. Component of the Integrator complex, composed of core subunits INTS1, INTS2, INTS3, INTS4, INTS5, INTS6, INTS7, INTS8, INTS9/RC74, INTS10, INTS11/CPSF3L, INTS12, INTS13, INTS14 and INTS15. The core complex associates with protein phosphatase 2A subunits PPP2CA and PPP2R1A, to form the Integrator-PP2A (INTAC) complex.

The protein localises to the nucleus. The protein resides in the chromosome. In terms of biological role, component of the integrator complex, a multiprotein complex that terminates RNA polymerase II (Pol II) transcription in the promoter-proximal region of genes. The integrator complex provides a quality checkpoint during transcription elongation by driving premature transcription termination of transcripts that are unfavorably configured for transcriptional elongation: the complex terminates transcription by (1) catalyzing dephosphorylation of the C-terminal domain (CTD) of Pol II subunit POLR2A/RPB1 and SUPT5H/SPT5, (2) degrading the exiting nascent RNA transcript via endonuclease activity and (3) promoting the release of Pol II from bound DNA. The integrator complex is also involved in terminating the synthesis of non-coding Pol II transcripts, such as enhancer RNAs (eRNAs), small nuclear RNAs (snRNAs), telomerase RNAs and long non-coding RNAs (lncRNAs). Within the integrator complex, INTS6 acts as a molecular adapter that promotes assembly of protein phosphatase 2A (PP2A) subunits to the integrator core complex, promoting recruitment of PP2A to transcription pause-release checkpoint. In Xenopus laevis (African clawed frog), this protein is Integrator complex subunit 6-B (ints6-b).